A 203-amino-acid polypeptide reads, in one-letter code: Glycerol-3-phosphate acyltransferase (203 aa).

A run of 4 helical transmembrane segments spans residues 6–26 (LTLL…AVLV), 82–102 (AISL…PIFF), 118–138 (APIG…LVLI), and 141–161 (YSSL…WWLD).

This sequence belongs to the PlsY family. In terms of assembly, probably interacts with PlsX.

It is found in the cell inner membrane. The catalysed reaction is an acyl phosphate + sn-glycerol 3-phosphate = a 1-acyl-sn-glycero-3-phosphate + phosphate. It functions in the pathway lipid metabolism; phospholipid metabolism. Catalyzes the transfer of an acyl group from acyl-phosphate (acyl-PO(4)) to glycerol-3-phosphate (G3P) to form lysophosphatidic acid (LPA). This enzyme utilizes acyl-phosphate as fatty acyl donor, but not acyl-CoA or acyl-ACP. The chain is Glycerol-3-phosphate acyltransferase from Shewanella sp. (strain MR-4).